Reading from the N-terminus, the 773-residue chain is 4'-phosphopantetheine phosphatase (773 aa).

Position 2 is an N-acetylalanine (A2). A pantothenate kinase region spans residues 2–402 (AECGASGSGS…SPELGPAQRA (401 aa)). Acetyl-CoA-binding residues include S196 and S199. Y320 carries the post-translational modification 3'-nitrotyrosine. Phosphoserine is present on residues S393 and S404. The interval 403-773 (RSGTFDLLEM…VIFKYEVPAE (371 aa)) is 4'-phosphopantetheine phosphatase. T406 carries the post-translational modification Phosphothreonine. Residues D623, N624, and D659 each contribute to the Mn(2+) site. The Subfamily II EGMGR motif signature appears at 724–728 (EGMGR).

It in the N-terminal section; belongs to the type II pantothenate kinase family. The protein in the C-terminal section; belongs to the damage-control phosphatase family. Phosphopantetheine phosphatase II subfamily. Homodimer. Interacts with PKM. Mn(2+) serves as cofactor. Requires Ni(2+) as cofactor. Widely expressed with high expression in the muscle. Expressed in the retina and lens epithelium, mainly in ganglion cell layer, outer plexiform layer and retinal pigment layer (at protein level).

It localises to the cytoplasm. The enzyme catalyses (R)-4'-phosphopantetheine + H2O = (R)-pantetheine + phosphate. It catalyses the reaction (R)-4'-phosphopantetheine sulfonate + H2O = (R)-pantetheine sulfonate + phosphate. The catalysed reaction is (R)-4'-phospho-S-sulfopantetheine + H2O = (R)-S-sulfopantetheine + phosphate. Its activity is regulated as follows. Activity is strongly promoted by Co(2+), Ni(2+), Mg(2+) and Mn(2+). Activity is inhibited by EDTA. In terms of biological role, phosphatase which shows a preference for 4'-phosphopantetheine and its oxidatively damaged forms (sulfonate or S-sulfonate), providing strong indirect evidence that the phosphatase activity pre-empts damage in the coenzyme A (CoA) pathway. Hydrolyzing excess 4'-phosphopantetheine could constitute a directed overflow mechanism to prevent its oxidation to the S-sulfonate, sulfonate, or other forms. Hydrolyzing 4'-phosphopantetheine sulfonate or S-sulfonate would forestall their conversion to inactive forms of CoA and acyl carrier protein. May play a role in the physiological regulation of CoA intracellular levels. The polypeptide is 4'-phosphopantetheine phosphatase (Homo sapiens (Human)).